A 374-amino-acid chain; its full sequence is 5-aminosalicylate 1,2-dioxygenase (374 aa).

The protein belongs to the gentisate 1,2-dioxygenase family. Fe(2+) is required as a cofactor.

It carries out the reaction 5-amino-2-hydroxybenzoate + O2 = (2Z,4E)-4-amino-6-oxohepta-2,4-dienedioate + H(+). Inhibited by SDS and o-phenanthroline, a ferrous iron chelator. Partially inhibited by EDTA. In terms of biological role, involved in the biodegradation of 3-aminobenzoate. Catalyzes the cleavage of the 5-aminosalicylate (5ASA) aromatic ring to form 4-amino-6-oxohepta-2,4-dienedioate (cis-ACOHDA). Can also convert gentisate, but the catalytic efficiency with 5ASA is 70-fold higher. The chain is 5-aminosalicylate 1,2-dioxygenase from Comamonas sp.